Here is a 189-residue protein sequence, read N- to C-terminus: Ion-translocating oxidoreductase complex subunit B (189 aa).

The segment at 1–26 (MSAIVIAIVVLTILALVFGVLLGFAA) is hydrophobic. The region spanning 32-90 (EGNPLTDQIEALLPQTQCGQCGYPGCRPYAEAIANGDKVNKCPPGGAATMEKLADLMGV) is the 4Fe-4S domain. [4Fe-4S] cluster-binding residues include Cys49, Cys52, Cys57, Cys73, Cys114, Cys117, Cys120, Cys124, Cys144, Cys147, Cys150, and Cys154. 4Fe-4S ferredoxin-type domains are found at residues 105 to 134 (KVAY…GSGK) and 135 to 164 (LMHT…MLPV).

The protein belongs to the 4Fe4S bacterial-type ferredoxin family. RnfB subfamily. The complex is composed of six subunits: RnfA, RnfB, RnfC, RnfD, RnfE and RnfG. The cofactor is [4Fe-4S] cluster.

The protein localises to the cell inner membrane. Functionally, part of a membrane-bound complex that couples electron transfer with translocation of ions across the membrane. The chain is Ion-translocating oxidoreductase complex subunit B from Shewanella pealeana (strain ATCC 700345 / ANG-SQ1).